The chain runs to 101 residues: Small ribosomal subunit protein uS14 (101 aa).

Belongs to the universal ribosomal protein uS14 family. As to quaternary structure, part of the 30S ribosomal subunit. Contacts proteins S3 and S10.

Functionally, binds 16S rRNA, required for the assembly of 30S particles and may also be responsible for determining the conformation of the 16S rRNA at the A site. In Buchnera aphidicola subsp. Acyrthosiphon pisum (strain APS) (Acyrthosiphon pisum symbiotic bacterium), this protein is Small ribosomal subunit protein uS14.